The sequence spans 413 residues: Argininosuccinate synthase (413 aa).

An ATP-binding site is contributed by 8–16; that stretch reads AYSGGLDTS. L-citrulline is bound at residue Tyr87. Residue Gly117 coordinates ATP. Thr119, Asn123, and Asp124 together coordinate L-aspartate. Asn123 lines the L-citrulline pocket. L-citrulline contacts are provided by Arg127, Ser175, Glu259, and Tyr271.

It belongs to the argininosuccinate synthase family. Type 1 subfamily. Homotetramer.

The protein localises to the cytoplasm. It carries out the reaction L-citrulline + L-aspartate + ATP = 2-(N(omega)-L-arginino)succinate + AMP + diphosphate + H(+). It participates in amino-acid biosynthesis; L-arginine biosynthesis; L-arginine from L-ornithine and carbamoyl phosphate: step 2/3. This Micrococcus luteus (strain ATCC 4698 / DSM 20030 / JCM 1464 / CCM 169 / CCUG 5858 / IAM 1056 / NBRC 3333 / NCIMB 9278 / NCTC 2665 / VKM Ac-2230) (Micrococcus lysodeikticus) protein is Argininosuccinate synthase.